The following is a 304-amino-acid chain: Probable 5-dehydro-4-deoxyglucarate dehydratase (304 aa).

Belongs to the DapA family.

The catalysed reaction is 5-dehydro-4-deoxy-D-glucarate + H(+) = 2,5-dioxopentanoate + CO2 + H2O. The protein operates within carbohydrate acid metabolism; D-glucarate degradation; 2,5-dioxopentanoate from D-glucarate: step 2/2. The protein is Probable 5-dehydro-4-deoxyglucarate dehydratase of Rhodococcus opacus (strain B4).